We begin with the raw amino-acid sequence, 916 residues long: Beta-scruin (916 aa).

Kelch repeat units follow at residues 82–133, 134–187, 188–235, 237–289, 291–341, and 342–390; these read AVLI…YFHG, KVYL…IMDE, RIFV…NNEG, IYVV…TQNK, IWIW…KAGT, and QVFI…GIPV. The interval 393-426 is disordered; sequence SPASDITTSKTTRSGSRKTQKTLKDKQQSDIHAR. The segment covering 414–425 has biased composition (basic and acidic residues); the sequence is TLKDKQQSDIHA. Kelch repeat units lie at residues 586–637, 638–691, 692–739, 741–793, 795–847, and 849–896; these read VIIA…YYRG, AIYV…VFND, SIYV…SHGG, LWVM…VCDD, IWLC…ALES, and LYLI…TIPP.

As to expression, sperm.

In terms of biological role, may have an enzymatic role. Found the acrosomal vesicle at the anterior of sperm but not in the acrosomal process. The protein is Beta-scruin of Limulus polyphemus (Atlantic horseshoe crab).